Reading from the N-terminus, the 180-residue chain is Bifunctional protein PyrR (180 aa).

The short motif at 101 to 113 (VILVDDVLYTGRT) is the PRPP-binding element.

It belongs to the purine/pyrimidine phosphoribosyltransferase family. PyrR subfamily. In terms of assembly, homodimer and homohexamer; in equilibrium.

The enzyme catalyses UMP + diphosphate = 5-phospho-alpha-D-ribose 1-diphosphate + uracil. Functionally, regulates transcriptional attenuation of the pyrimidine nucleotide (pyr) operon by binding in a uridine-dependent manner to specific sites on pyr mRNA. This disrupts an antiterminator hairpin in the RNA and favors formation of a downstream transcription terminator, leading to a reduced expression of downstream genes. Its function is as follows. Also displays a weak uracil phosphoribosyltransferase activity which is not physiologically significant. In Bacillus cytotoxicus (strain DSM 22905 / CIP 110041 / 391-98 / NVH 391-98), this protein is Bifunctional protein PyrR.